The sequence spans 133 residues: Protein Ac75 (133 aa).

As to quaternary structure, interacts with protein Ac76.

It localises to the virion. The protein localises to the host cytoplasm. The protein resides in the host nucleus. Plays a role in nuclear egress of nucleocapsids and intranuclear microvesicle formation. The sequence is that of Protein Ac75 (Ac75) from Lepidoptera (butterflies and moths).